The primary structure comprises 141 residues: Hemoglobin subunit alpha-D (141 aa).

The Globin domain maps to 1–141 (MLTADDKKLI…VAAVLAEKYR (141 aa)). The heme b site is built by H58 and H87.

Belongs to the globin family. As to quaternary structure, heterotetramer of two alpha-D chains and two beta chains. In terms of tissue distribution, red blood cells.

Involved in oxygen transport from the lung to the various peripheral tissues. The chain is Hemoglobin subunit alpha-D (HBAD) from Struthio camelus (Common ostrich).